The primary structure comprises 328 residues: MARVKIGEFKFGEDTFNLRYVLERDQQVRFVAKDVANSLKYTVCDKAIRVHVDNKYKSLFEQTIQNGGPTSNSVVKRGDPLYLQPHTVLITKSGVIQLIMKSKLPYAIELQEWLLEEVIPQVLCTGKYDPAIKQREEESKQLVTKLIATFTEHTNALQAVVAQKTEELVKKQEFIERIVAIKDKQIEAKDLQVTRVMTDLNRMYTGFQETMQKKDEIMQKKDAQVTDLVAKVVDLSDRAVQYPADKRKHPVLCVTRDGTTFTAITGQKTYVENQKHKRNINVANIVVENIRPNPTVDWNNATDRLQAKRSKRSIVLVRWKKRNNLKIG.

The 124-residue stretch at 3–126 (RVKIGEFKFG…EVIPQVLCTG (124 aa)) folds into the Bro-N domain.

This is an uncharacterized protein from Autographa californica nuclear polyhedrosis virus (AcMNPV).